Consider the following 474-residue polypeptide: Probable threonine--tRNA ligase, mitochondrial (474 aa).

The transit peptide at 1-27 (MMKLKKFQLHTPFAHSCNRVEIYTARF) directs the protein to the mitochondrion.

The protein belongs to the class-II aminoacyl-tRNA synthetase family.

It is found in the mitochondrion matrix. It catalyses the reaction tRNA(Thr) + L-threonine + ATP = L-threonyl-tRNA(Thr) + AMP + diphosphate + H(+). The polypeptide is Probable threonine--tRNA ligase, mitochondrial (Schizosaccharomyces pombe (strain 972 / ATCC 24843) (Fission yeast)).